We begin with the raw amino-acid sequence, 261 residues long: Carbonic anhydrase 1 (261 aa).

Ala2 carries the post-translational modification N-acetylalanine. The region spanning 4 to 261 (SDWGYDSPNG…LKGRTVRAFF (258 aa)) is the Alpha-carbonic anhydrase domain. The active-site Proton donor/acceptor is the His65. Zn(2+) is bound by residues His95, His97, and His120. Residues Thr200 and 200–201 (TH) contribute to the substrate site.

The protein belongs to the alpha-carbonic anhydrase family. The cofactor is Zn(2+).

The protein localises to the cytoplasm. The catalysed reaction is hydrogencarbonate + H(+) = CO2 + H2O. The enzyme catalyses urea = cyanamide + H2O. Its activity is regulated as follows. Inhibited by acetazolamide. In terms of biological role, catalyzes the reversible hydration of carbon dioxide. Can hydrate cyanamide to urea. In Equus caballus (Horse), this protein is Carbonic anhydrase 1 (CA1).